A 101-amino-acid chain; its full sequence is STAS-domain containing protein PA14_20770 (101 aa).

An STAS domain is found at 14–101; the sequence is LTIQIQGRFD…SNFEQLFKIS (88 aa).

In terms of processing, phosphorylated on a serine residue, possibly on Ser-56.

Its subcellular location is the secreted. The polypeptide is STAS-domain containing protein PA14_20770 (Pseudomonas aeruginosa (strain UCBPP-PA14)).